A 484-amino-acid polypeptide reads, in one-letter code: tRNA sulfurtransferase (484 aa).

In terms of domain architecture, THUMP spans 63-167; the sequence is REMIERLTCT…DQRLYVIHNQ (105 aa). Residues 185-186, Lys-267, Gly-289, and Gln-298 each bind ATP; that span reads LM. Cys-346 and Cys-457 are joined by a disulfide. A Rhodanese domain is found at 405–483; it reads ALPGQIVIDI…GHANVRVYRP (79 aa). Cys-457 (cysteine persulfide intermediate) is an active-site residue.

This sequence belongs to the ThiI family.

Its subcellular location is the cytoplasm. The enzyme catalyses [ThiI sulfur-carrier protein]-S-sulfanyl-L-cysteine + a uridine in tRNA + 2 reduced [2Fe-2S]-[ferredoxin] + ATP + H(+) = [ThiI sulfur-carrier protein]-L-cysteine + a 4-thiouridine in tRNA + 2 oxidized [2Fe-2S]-[ferredoxin] + AMP + diphosphate. It catalyses the reaction [ThiS sulfur-carrier protein]-C-terminal Gly-Gly-AMP + S-sulfanyl-L-cysteinyl-[cysteine desulfurase] + AH2 = [ThiS sulfur-carrier protein]-C-terminal-Gly-aminoethanethioate + L-cysteinyl-[cysteine desulfurase] + A + AMP + 2 H(+). It participates in cofactor biosynthesis; thiamine diphosphate biosynthesis. Its function is as follows. Catalyzes the ATP-dependent transfer of a sulfur to tRNA to produce 4-thiouridine in position 8 of tRNAs, which functions as a near-UV photosensor. Also catalyzes the transfer of sulfur to the sulfur carrier protein ThiS, forming ThiS-thiocarboxylate. This is a step in the synthesis of thiazole, in the thiamine biosynthesis pathway. The sulfur is donated as persulfide by IscS. In Pseudomonas putida (strain ATCC 47054 / DSM 6125 / CFBP 8728 / NCIMB 11950 / KT2440), this protein is tRNA sulfurtransferase.